A 258-amino-acid polypeptide reads, in one-letter code: Imidazole glycerol phosphate synthase subunit HisF (258 aa).

Active-site residues include aspartate 11 and aspartate 130.

It belongs to the HisA/HisF family. As to quaternary structure, heterodimer of HisH and HisF.

It localises to the cytoplasm. It catalyses the reaction 5-[(5-phospho-1-deoxy-D-ribulos-1-ylimino)methylamino]-1-(5-phospho-beta-D-ribosyl)imidazole-4-carboxamide + L-glutamine = D-erythro-1-(imidazol-4-yl)glycerol 3-phosphate + 5-amino-1-(5-phospho-beta-D-ribosyl)imidazole-4-carboxamide + L-glutamate + H(+). The protein operates within amino-acid biosynthesis; L-histidine biosynthesis; L-histidine from 5-phospho-alpha-D-ribose 1-diphosphate: step 5/9. Its function is as follows. IGPS catalyzes the conversion of PRFAR and glutamine to IGP, AICAR and glutamate. The HisF subunit catalyzes the cyclization activity that produces IGP and AICAR from PRFAR using the ammonia provided by the HisH subunit. In Magnetococcus marinus (strain ATCC BAA-1437 / JCM 17883 / MC-1), this protein is Imidazole glycerol phosphate synthase subunit HisF.